The primary structure comprises 372 residues: UDP-N-acetylglucosamine--N-acetylmuramyl-(pentapeptide) pyrophosphoryl-undecaprenol N-acetylglucosamine transferase (372 aa).

UDP-N-acetyl-alpha-D-glucosamine is bound by residues 21–23, asparagine 135, arginine 172, serine 206, and glutamine 303; that span reads TAG.

It belongs to the glycosyltransferase 28 family. MurG subfamily.

The protein resides in the cell membrane. The enzyme catalyses di-trans,octa-cis-undecaprenyl diphospho-N-acetyl-alpha-D-muramoyl-L-alanyl-D-glutamyl-meso-2,6-diaminopimeloyl-D-alanyl-D-alanine + UDP-N-acetyl-alpha-D-glucosamine = di-trans,octa-cis-undecaprenyl diphospho-[N-acetyl-alpha-D-glucosaminyl-(1-&gt;4)]-N-acetyl-alpha-D-muramoyl-L-alanyl-D-glutamyl-meso-2,6-diaminopimeloyl-D-alanyl-D-alanine + UDP + H(+). It functions in the pathway cell wall biogenesis; peptidoglycan biosynthesis. Functionally, cell wall formation. Catalyzes the transfer of a GlcNAc subunit on undecaprenyl-pyrophosphoryl-MurNAc-pentapeptide (lipid intermediate I) to form undecaprenyl-pyrophosphoryl-MurNAc-(pentapeptide)GlcNAc (lipid intermediate II). This chain is UDP-N-acetylglucosamine--N-acetylmuramyl-(pentapeptide) pyrophosphoryl-undecaprenol N-acetylglucosamine transferase, found in Paenarthrobacter aurescens (strain TC1).